We begin with the raw amino-acid sequence, 438 residues long: MTAAPDARTTAVMSAPLAEVDPDIAELLAKELGRQRDTLEMIASENFAPRAVLQAQGSVLTNKYAEGLPGRRYYGGCEHVDVVENLARDRAKALFGAEFANVQPHSGAQANAAVLHALMSPGERLLGLDLANGGHLTHGMRLNFSGKLYENGFYGVDPATHLIDMDAVRATALEFRPKVIIAGWSAYPRVLDFAAFRSIADEVGAKLLVDMAHFAGLVAAGLHPSPVPHADVVSTTVHKTLGGGRSGLIVGKQQYAKAINSAVFPGQQGGPLMHVIAGKAVALKIAATPEFADRQRRTLSGARIIADRLMAPDVAKAGVSVVSGGTDVHLVLVDLRDSPLDGQAAEDLLHEVGITVNRNAVPNDPRPPMVTSGLRIGTPALATRGFGDTEFTEVADIIATALATGSSVDVSALKDRATRLARAFPLYDGLEEWSLVGR.

(6S)-5,6,7,8-tetrahydrofolate contacts are provided by residues Leu130 and 134–136; that span reads GHL. An N6-(pyridoxal phosphate)lysine modification is found at Lys239.

Belongs to the SHMT family. Homodimer. Pyridoxal 5'-phosphate serves as cofactor.

Its subcellular location is the cytoplasm. It carries out the reaction (6R)-5,10-methylene-5,6,7,8-tetrahydrofolate + glycine + H2O = (6S)-5,6,7,8-tetrahydrofolate + L-serine. Its pathway is one-carbon metabolism; tetrahydrofolate interconversion. The protein operates within amino-acid biosynthesis; glycine biosynthesis; glycine from L-serine: step 1/1. Functionally, catalyzes the reversible interconversion of serine and glycine with tetrahydrofolate (THF) serving as the one-carbon carrier. This reaction serves as the major source of one-carbon groups required for the biosynthesis of purines, thymidylate, methionine, and other important biomolecules. Also exhibits THF-independent aldolase activity toward beta-hydroxyamino acids, producing glycine and aldehydes, via a retro-aldol mechanism. This is Serine hydroxymethyltransferase 1 from Mycobacterium tuberculosis (strain CDC 1551 / Oshkosh).